The chain runs to 232 residues: NAD(P)H-quinone oxidoreductase subunit K 1 (232 aa).

Positions 49, 50, 114, and 145 each coordinate [4Fe-4S] cluster.

It belongs to the complex I 20 kDa subunit family. In terms of assembly, NDH-1 can be composed of about 15 different subunits; different subcomplexes with different compositions have been identified which probably have different functions. Requires [4Fe-4S] cluster as cofactor.

It localises to the cell inner membrane. The catalysed reaction is a plastoquinone + NADH + (n+1) H(+)(in) = a plastoquinol + NAD(+) + n H(+)(out). The enzyme catalyses a plastoquinone + NADPH + (n+1) H(+)(in) = a plastoquinol + NADP(+) + n H(+)(out). Functionally, NDH-1 shuttles electrons from an unknown electron donor, via FMN and iron-sulfur (Fe-S) centers, to quinones in the respiratory and/or the photosynthetic chain. The immediate electron acceptor for the enzyme in this species is believed to be plastoquinone. Couples the redox reaction to proton translocation, and thus conserves the redox energy in a proton gradient. Cyanobacterial NDH-1 also plays a role in inorganic carbon-concentration. The sequence is that of NAD(P)H-quinone oxidoreductase subunit K 1 from Gloeobacter violaceus (strain ATCC 29082 / PCC 7421).